The primary structure comprises 153 residues: Aspartate carbamoyltransferase regulatory chain (153 aa).

Residues Cys109, Cys114, Cys138, and Cys141 each contribute to the Zn(2+) site.

It belongs to the PyrI family. As to quaternary structure, contains catalytic and regulatory chains. Zn(2+) is required as a cofactor.

Involved in allosteric regulation of aspartate carbamoyltransferase. The sequence is that of Aspartate carbamoyltransferase regulatory chain from Vibrio campbellii (strain ATCC BAA-1116).